A 284-amino-acid chain; its full sequence is ATP synthase gamma chain (284 aa).

This sequence belongs to the ATPase gamma chain family. As to quaternary structure, F-type ATPases have 2 components, CF(1) - the catalytic core - and CF(0) - the membrane proton channel. CF(1) has five subunits: alpha(3), beta(3), gamma(1), delta(1), epsilon(1). CF(0) has three main subunits: a, b and c.

The protein localises to the cell membrane. Functionally, produces ATP from ADP in the presence of a proton gradient across the membrane. The gamma chain is believed to be important in regulating ATPase activity and the flow of protons through the CF(0) complex. This Bacillus licheniformis (strain ATCC 14580 / DSM 13 / JCM 2505 / CCUG 7422 / NBRC 12200 / NCIMB 9375 / NCTC 10341 / NRRL NRS-1264 / Gibson 46) protein is ATP synthase gamma chain.